Here is a 330-residue protein sequence, read N- to C-terminus: Aspartate--ammonia ligase (330 aa).

It belongs to the class-II aminoacyl-tRNA synthetase family. AsnA subfamily.

It localises to the cytoplasm. It carries out the reaction L-aspartate + NH4(+) + ATP = L-asparagine + AMP + diphosphate + H(+). Its pathway is amino-acid biosynthesis; L-asparagine biosynthesis; L-asparagine from L-aspartate (ammonia route): step 1/1. The polypeptide is Aspartate--ammonia ligase (Salmonella newport (strain SL254)).